The primary structure comprises 614 residues: UvrABC system protein C (614 aa).

The 79-residue stretch at 16–94 (SRPGVYRMFG…VKSLKPRFNV (79 aa)) folds into the GIY-YIG domain. Residues 204 to 239 (GELQKRLASEMEAASEAMEFETAARLRDRIRAIAHV) enclose the UVR domain.

This sequence belongs to the UvrC family. In terms of assembly, interacts with UvrB in an incision complex.

It localises to the cytoplasm. Its function is as follows. The UvrABC repair system catalyzes the recognition and processing of DNA lesions. UvrC both incises the 5' and 3' sides of the lesion. The N-terminal half is responsible for the 3' incision and the C-terminal half is responsible for the 5' incision. In Hyphomonas neptunium (strain ATCC 15444), this protein is UvrABC system protein C.